The primary structure comprises 122 residues: Large ribosomal subunit protein uL14 (122 aa).

It belongs to the universal ribosomal protein uL14 family. As to quaternary structure, part of the 50S ribosomal subunit. Forms a cluster with proteins L3 and L19. In the 70S ribosome, L14 and L19 interact and together make contacts with the 16S rRNA in bridges B5 and B8.

In terms of biological role, binds to 23S rRNA. Forms part of two intersubunit bridges in the 70S ribosome. In Nitratidesulfovibrio vulgaris (strain ATCC 29579 / DSM 644 / CCUG 34227 / NCIMB 8303 / VKM B-1760 / Hildenborough) (Desulfovibrio vulgaris), this protein is Large ribosomal subunit protein uL14.